Reading from the N-terminus, the 666-residue chain is Non-receptor tyrosine-protein kinase TNK1 (666 aa).

Residue S96 is modified to Phosphoserine. Residues 116–383 (VRRGELLGSG…LEGLLQEAWL (268 aa)) form the Protein kinase domain. Residues 122-130 (LGSGCFGVV) and K148 contribute to the ATP site. The active-site Proton acceptor is D245. A Phosphoserine modification is found at S255. The SH3 domain maps to 381 to 441 (AWLSEGRCVR…PASAVTLADL (61 aa)). Residues 442–589 (GGSPVTHPAH…VPSGGPLSDP (148 aa)) are disordered. The segment covering 457–473 (HGEKCRGGTDGDREKAT) has biased composition (basic and acidic residues). S498 is modified (phosphoserine). T510 carries the post-translational modification Phosphothreonine. S515 is subject to Phosphoserine. A compositionally biased stretch (pro residues) spans 531-544 (DLPPRPPDLPPRPP). Residue S582 is modified to Phosphoserine.

This sequence belongs to the protein kinase superfamily. Tyr protein kinase family. Interacts with the SH3 domain of PLCG1 via its Pro-rich domain. Post-translationally, autophosphorylated on tyrosine residues. Expressed in whole embryo and all adult tissues examined including liver, kidney, heart, brain, skeletal muscle and intestine. Also detected in various myeloid- and lymphoid-derived cell lines.

The protein resides in the membrane. Its subcellular location is the cytoplasm. It carries out the reaction L-tyrosyl-[protein] + ATP = O-phospho-L-tyrosyl-[protein] + ADP + H(+). Functionally, may function in signaling pathways utilized broadly during fetal development and more selectively in adult tissues and in cells of the lymphohematopoietic system. Could specifically be involved in phospholipid signal transduction. Involved in negative regulation of cell growth. Has tumor suppressor properties. Plays a negative regulatory role in the Ras-MAPK pathway. The polypeptide is Non-receptor tyrosine-protein kinase TNK1 (Mus musculus (Mouse)).